The chain runs to 427 residues: MAAAAAEQQQQGFRPLDEASLVAYIKATPALAARLGGRLDALTIKEVGDGNLNFVYIVLSDAGSLVIKQALPYIRLVGDSWPMSRERAYFEASALQKHRALCPDHVPEVYHFDRAMSLIGMRYIEPPHIILRKGLVAGVEYPLLAEHMADYMAKTLFFTSLLYNSTTDHKKGVAQYCDNVEMSRLTEQVVFSDPYRVAKYNRCTSPFLDNDAAAVREDAELKLEIAELKSMFIERAQAFLHGDLHTSSIMVTPDSTQVIDPEFAFYGPMGYDIGAFLGNLILAYFSQDGHADQANDRKAYKKWILKTIEDSWNFFHKKFVELWNKHKDGNGEAYLPPIYNSSELLSLVQKKYMTSLFHDSLGFGSAKMIRRIVGIAHVEDFESIEDASKRASCERRALNCAKAILKGRRQFESIEQVIVHVQSFDRD.

ATP contacts are provided by residues 49 to 53 (DGNLN), lysine 68, and 122 to 124 (RYI). Substrate is bound at residue asparagine 51. Position 243 (aspartate 243) interacts with substrate. 260–262 (DPE) lines the ATP pocket. Residue arginine 370 coordinates substrate.

This sequence belongs to the methylthioribose kinase family. Homodimer.

It carries out the reaction 5-(methylsulfanyl)-D-ribose + ATP = 5-(methylsulfanyl)-alpha-D-ribose 1-phosphate + ADP + H(+). The protein operates within amino-acid biosynthesis; L-methionine biosynthesis via salvage pathway; S-methyl-5-thio-alpha-D-ribose 1-phosphate from S-methyl-5'-thioadenosine (hydrolase route): step 2/2. In terms of biological role, catalyzes the phosphorylation of methylthioribose into methylthioribose-1-phosphate. This Oryza sativa subsp. japonica (Rice) protein is Methylthioribose kinase 2 (MTK2).